Consider the following 244-residue polypeptide: uncharacterized protein (244 aa).

One can recognise an FCP1 homology domain in the interval 19–196 (ATDNRKLVIL…ACVIRYLKHL (178 aa)).

This is an uncharacterized protein from Schizosaccharomyces pombe (strain 972 / ATCC 24843) (Fission yeast).